Here is a 316-residue protein sequence, read N- to C-terminus: MTTLTNQKPLGVLFMAYGGPENLGEMPGYLADIRAGRVTSQAILDEITNNYRLIGGKSPLPEFTRAQVEATMEQLASTGRPLKAYIGMRHWSPWIEDAVREMLDDGIEQAIAIVLAPQYSSLSVAKYQKKIKAALEMNHGHIDFAYIDNYHTEPGYITALADRVRIGIQEFPEDERDDVHVILSAHSLPVRIIKEGDPYADQLHETARLVAAQAGLTDEQWSWSYQSAGRSPEPWLGPQLDEHLRDLNEQGIKKVVSIAIGFVSDHVEILFDIDIAAQEVAHELGMTLVRPPALNTDPLFIGTLASVIERKAAEVA.

2 residues coordinate Fe cation: H186 and E268.

This sequence belongs to the ferrochelatase family.

It localises to the cytoplasm. The enzyme catalyses heme b + 2 H(+) = protoporphyrin IX + Fe(2+). The protein operates within porphyrin-containing compound metabolism; protoheme biosynthesis; protoheme from protoporphyrin-IX: step 1/1. Catalyzes the ferrous insertion into protoporphyrin IX. This chain is Ferrochelatase, found in Deinococcus radiodurans (strain ATCC 13939 / DSM 20539 / JCM 16871 / CCUG 27074 / LMG 4051 / NBRC 15346 / NCIMB 9279 / VKM B-1422 / R1).